Here is a 769-residue protein sequence, read N- to C-terminus: CO(2)-response secreted protease (769 aa).

An N-terminal signal peptide occupies residues M1 to A27. Positions V35–H108 constitute an Inhibitor I9 domain. The Peptidase S8 domain maps to S112–M613. Residues D145 and H210 each act as charge relay system in the active site. The region spanning A381–Y465 is the PA domain. The active-site Charge relay system is S546.

It belongs to the peptidase S8 family. In terms of tissue distribution, expressed in roots, guard cells and meristemoid and pavement cells.

It is found in the secreted. The protein localises to the cell wall. It catalyses the reaction Release of an N-terminal tripeptide from a polypeptide.. Mediates CO(2)-controlled stomatal development by cleaving peptide EPF2 (AC Q8LC53). Not active on peptides EPF1 (AC Q8S8I4) or stomagen (AC Q9SV72). The sequence is that of CO(2)-response secreted protease from Arabidopsis thaliana (Mouse-ear cress).